Here is a 239-residue protein sequence, read N- to C-terminus: 7-cyano-7-deazaguanine synthase (239 aa).

Residue 8–18 (FSGGLDSTASL) participates in ATP binding. The Zn(2+) site is built by C194, C209, C212, and C215.

This sequence belongs to the QueC family.

It carries out the reaction 7-carboxy-7-deazaguanine + NH4(+) + ATP = 7-cyano-7-deazaguanine + ADP + phosphate + H2O + H(+). It participates in purine metabolism; 7-cyano-7-deazaguanine biosynthesis. Catalyzes the ATP-dependent conversion of 7-carboxy-7-deazaguanine (CDG) to 7-cyano-7-deazaguanine (preQ(0)). The polypeptide is 7-cyano-7-deazaguanine synthase (Pyrococcus abyssi (strain GE5 / Orsay)).